The chain runs to 454 residues: Gastrin/cholecystokinin type B receptor (454 aa).

The Extracellular segment spans residues 1–57 (MELLKPNRSVLGSGPGPGASLCRSGGPLLNGSGTGNLSCEPPRIRGAGTRELELAIR). N-linked (GlcNAc...) asparagine glycans are attached at residues Asn-7, Asn-30, and Asn-36. Residues 58 to 79 (VTLYAVIFLMSVGGNVLIIVVL) traverse the membrane as a helical segment. Residues 80–87 (GLSRRLRT) lie on the Cytoplasmic side of the membrane. The helical transmembrane segment at 88–109 (VTNAFLLSLAVSDLLLAVACMP) threads the bilayer. Residues 110–131 (FTLLPNLMGTFIFGTVVCKAVS) are Extracellular-facing. A disulfide bond links Cys-127 and Cys-205. The helical transmembrane segment at 132–150 (YFMGVSVSVSTLSLVAIAL) threads the bilayer. Residues 151-170 (ERYSAICRPLQARVWQTRSH) are Cytoplasmic-facing. A helical membrane pass occupies residues 171 to 189 (AARVIVATWMLSGLLMVPY). Residues 190–219 (PVYTAVQPAGPRVLQCMHRWPSARVRQTWS) lie on the Extracellular side of the membrane. The chain crosses the membrane as a helical span at residues 220–242 (VLLLLLLFFVPGVVMAVAYGLIS). Over 243-340 (RELYLGLRFD…KLLAKKRVVR (98 aa)) the chain is Cytoplasmic. Positions 257–284 (SESQSRVGSQGGLPGGTGQGPAQANGRC) are disordered. Gly residues predominate over residues 265-275 (SQGGLPGGTGQ). Residues 341 to 362 (MLLVIVVLFFLCWLPVYSANTW) traverse the membrane as a helical segment. Residues 363 to 380 (RAFDGPGAHRALSGAPIS) lie on the Extracellular side of the membrane. Residues 381–401 (FIHLLTYASACVNPLVYCFMH) traverse the membrane as a helical segment. The Cytoplasmic segment spans residues 402–454 (RRFRQACLDTCTRCCPRPPRARPRPLPDEDPPTPSIASLSRLSYTTISTLGPG). Cys-415 is lipidated: S-palmitoyl cysteine. The disordered stretch occupies residues 422 to 441 (ARPRPLPDEDPPTPSIASLS).

Belongs to the G-protein coupled receptor 1 family.

The protein resides in the cell membrane. Functionally, receptor for gastrin and cholecystokinin. The CCK-B receptors occur throughout the central nervous system where they modulate anxiety, analgesia, arousal, and neuroleptic activity. This receptor mediates its action by association with G proteins that activate a phosphatidylinositol-calcium second messenger system. The protein is Gastrin/cholecystokinin type B receptor (CCKBR) of Bos taurus (Bovine).